A 202-amino-acid polypeptide reads, in one-letter code: DNA polymerase III subunit epsilon (202 aa).

2 residues coordinate a divalent metal cation: aspartate 23 and glutamate 25. Residues aspartate 23 and glutamate 25 each coordinate substrate. Histidine 162 (proton acceptor) is an active-site residue. Residue aspartate 167 participates in a divalent metal cation binding. Aspartate 167 lines the substrate pocket.

In terms of assembly, DNA polymerase III contains a core (composed of alpha, epsilon and theta chains) that associates with a tau subunit. This core dimerizes to form the POLIII' complex. PolIII' associates with the gamma complex (composed of gamma, delta, delta', psi and chi chains) and with the beta chain to form the complete DNA polymerase III complex. Mg(2+) is required as a cofactor. The cofactor is Mn(2+).

It carries out the reaction DNA(n) + a 2'-deoxyribonucleoside 5'-triphosphate = DNA(n+1) + diphosphate. In terms of biological role, DNA polymerase III is a complex, multichain enzyme responsible for most of the replicative synthesis in bacteria. The epsilon subunit contain the editing function and is a proofreading 3'-5' exonuclease. The polypeptide is DNA polymerase III subunit epsilon (dnaQ) (Aquifex aeolicus (strain VF5)).